We begin with the raw amino-acid sequence, 149 residues long: 3-dehydroquinate dehydratase (149 aa).

Catalysis depends on Tyr-26, which acts as the Proton acceptor. 3 residues coordinate substrate: Asn-77, His-83, and Asp-90. The active-site Proton donor is the His-103. Substrate is bound by residues 104-105 (LS) and Arg-114.

Belongs to the type-II 3-dehydroquinase family. In terms of assembly, homododecamer.

The enzyme catalyses 3-dehydroquinate = 3-dehydroshikimate + H2O. Its pathway is metabolic intermediate biosynthesis; chorismate biosynthesis; chorismate from D-erythrose 4-phosphate and phosphoenolpyruvate: step 3/7. In terms of biological role, catalyzes a trans-dehydration via an enolate intermediate. The protein is 3-dehydroquinate dehydratase of Aeromonas salmonicida (strain A449).